Here is a 467-residue protein sequence, read N- to C-terminus: ATP synthase subunit beta (467 aa).

Residue 154-161 coordinates ATP; the sequence is GGAGVGKT.

Belongs to the ATPase alpha/beta chains family. F-type ATPases have 2 components, CF(1) - the catalytic core - and CF(0) - the membrane proton channel. CF(1) has five subunits: alpha(3), beta(3), gamma(1), delta(1), epsilon(1). CF(0) has three main subunits: a(1), b(2) and c(9-12). The alpha and beta chains form an alternating ring which encloses part of the gamma chain. CF(1) is attached to CF(0) by a central stalk formed by the gamma and epsilon chains, while a peripheral stalk is formed by the delta and b chains.

The protein resides in the cell inner membrane. The enzyme catalyses ATP + H2O + 4 H(+)(in) = ADP + phosphate + 5 H(+)(out). In terms of biological role, produces ATP from ADP in the presence of a proton gradient across the membrane. The catalytic sites are hosted primarily by the beta subunits. This Leptospira borgpetersenii serovar Hardjo-bovis (strain JB197) protein is ATP synthase subunit beta.